A 184-amino-acid polypeptide reads, in one-letter code: Holliday junction branch migration complex subunit RuvA (184 aa).

The tract at residues 1–64 is domain I; that stretch reads MIKAIEGIIT…EDANLLYGFI (64 aa). The interval 65 to 137 is domain II; sequence KESEQRIFEM…LSDAKFGEIN (73 aa). A region of interest (flexible linker) is located at residue asparagine 137. Residues 138–184 form a domain III region; the sequence is SMPSYQNEAFMALESLGFKRDRISKVLNECSSNDTASLIKEALKKLA.

It belongs to the RuvA family. Homotetramer. Forms an RuvA(8)-RuvB(12)-Holliday junction (HJ) complex. HJ DNA is sandwiched between 2 RuvA tetramers; dsDNA enters through RuvA and exits via RuvB. An RuvB hexamer assembles on each DNA strand where it exits the tetramer. Each RuvB hexamer is contacted by two RuvA subunits (via domain III) on 2 adjacent RuvB subunits; this complex drives branch migration. In the full resolvosome a probable DNA-RuvA(4)-RuvB(12)-RuvC(2) complex forms which resolves the HJ.

The protein resides in the cytoplasm. The RuvA-RuvB-RuvC complex processes Holliday junction (HJ) DNA during genetic recombination and DNA repair, while the RuvA-RuvB complex plays an important role in the rescue of blocked DNA replication forks via replication fork reversal (RFR). RuvA specifically binds to HJ cruciform DNA, conferring on it an open structure. The RuvB hexamer acts as an ATP-dependent pump, pulling dsDNA into and through the RuvAB complex. HJ branch migration allows RuvC to scan DNA until it finds its consensus sequence, where it cleaves and resolves the cruciform DNA. This is Holliday junction branch migration complex subunit RuvA from Campylobacter fetus subsp. fetus (strain 82-40).